A 381-amino-acid polypeptide reads, in one-letter code: Heme A synthase (381 aa).

The tract at residues 1-23 is disordered; that stretch reads MARRPVFQEVTETTPPGTTPSGG. Residues 11 to 23 are compositionally biased toward low complexity; that stretch reads TETTPPGTTPSGG. 8 consecutive transmembrane segments (helical) span residues 34–54, 120–140, 151–171, 185–205, 228–248, 285–305, 319–339, and 342–362; these read GAIRLWLVVLFVMVAAMIALG, RLLGRLVGLVWAAGFVFFLAT, LLLLGALGGAQGAIGWWMVHS, LATHLGLAFAILGLIAWYVLA, TTGLMHLAFVQILLGALVAGI, LVQFIHRMTGYLLAVFAVVVF, AYVAMLVALAVQVALGIMNVL, and SPLPLALAHQIGAVALFTLIL. His-290 lines the heme pocket. Residue His-350 participates in heme binding.

This sequence belongs to the COX15/CtaA family. Type 2 subfamily. As to quaternary structure, interacts with CtaB. The cofactor is heme b.

It localises to the cell membrane. It catalyses the reaction Fe(II)-heme o + 2 A + H2O = Fe(II)-heme a + 2 AH2. The protein operates within porphyrin-containing compound metabolism; heme A biosynthesis; heme A from heme O: step 1/1. Its function is as follows. Catalyzes the conversion of heme O to heme A by two successive hydroxylations of the methyl group at C8. The first hydroxylation forms heme I, the second hydroxylation results in an unstable dihydroxymethyl group, which spontaneously dehydrates, resulting in the formyl group of heme A. This chain is Heme A synthase, found in Paracoccus denitrificans (strain Pd 1222).